Reading from the N-terminus, the 115-residue chain is U3-lycotoxin-Ls1a (115 aa).

The N-terminal stretch at 1 to 20 (MKFVLLFGVFLVTLFSYSSA) is a signal peptide. A propeptide spanning residues 21–44 (EMLDDFDQAAEDELLSLIEKEEAR) is cleaved from the precursor. 4 disulfide bridges follow: Cys48–Cys63, Cys55–Cys72, Cys62–Cys87, and Cys74–Cys85.

The protein belongs to the neurotoxin 19 (CSTX) family. 01 subfamily. Expressed by the venom gland.

Its subcellular location is the secreted. The protein is U3-lycotoxin-Ls1a of Lycosa singoriensis (Wolf spider).